The primary structure comprises 286 residues: Thymidylate synthase (286 aa).

DUMP contacts are provided by residues Arg-21 and 136 to 137 (RR). Cys-156 (nucleophile) is an active-site residue. DUMP contacts are provided by residues 176–179 (RSVD), Asn-187, and 217–219 (HIY). Position 179 (Asp-179) interacts with (6R)-5,10-methylene-5,6,7,8-tetrahydrofolate. Ala-285 is a (6R)-5,10-methylene-5,6,7,8-tetrahydrofolate binding site.

This sequence belongs to the thymidylate synthase family. In terms of assembly, homodimer.

The enzyme catalyses dUMP + (6R)-5,10-methylene-5,6,7,8-tetrahydrofolate = 7,8-dihydrofolate + dTMP. The protein operates within pyrimidine metabolism; dTTP biosynthesis. The polypeptide is Thymidylate synthase (TD) (Enterobacteria phage T4 (Bacteriophage T4)).